Here is a 382-residue protein sequence, read N- to C-terminus: 1-deoxy-D-xylulose 5-phosphate reductoisomerase (382 aa).

Positions 10, 11, 12, 13, 36, 37, 38, and 121 each coordinate NADPH. Lys122 provides a ligand contact to 1-deoxy-D-xylulose 5-phosphate. Glu123 is a binding site for NADPH. Residue Asp147 coordinates Mn(2+). 1-deoxy-D-xylulose 5-phosphate-binding residues include Ser148, Glu149, Ser173, and His196. Position 149 (Glu149) interacts with Mn(2+). Gly202 provides a ligand contact to NADPH. 1-deoxy-D-xylulose 5-phosphate is bound by residues Ser209, Asn214, Lys215, and Glu218. Glu218 is a binding site for Mn(2+).

Belongs to the DXR family. The cofactor is Mg(2+). Requires Mn(2+) as cofactor.

It carries out the reaction 2-C-methyl-D-erythritol 4-phosphate + NADP(+) = 1-deoxy-D-xylulose 5-phosphate + NADPH + H(+). The protein operates within isoprenoid biosynthesis; isopentenyl diphosphate biosynthesis via DXP pathway; isopentenyl diphosphate from 1-deoxy-D-xylulose 5-phosphate: step 1/6. Its function is as follows. Catalyzes the NADPH-dependent rearrangement and reduction of 1-deoxy-D-xylulose-5-phosphate (DXP) to 2-C-methyl-D-erythritol 4-phosphate (MEP). The polypeptide is 1-deoxy-D-xylulose 5-phosphate reductoisomerase (Geobacillus kaustophilus (strain HTA426)).